A 615-amino-acid chain; its full sequence is 1-deoxy-D-xylulose-5-phosphate synthase (615 aa).

Thiamine diphosphate contacts are provided by residues H76 and 117–119; that span reads GHS. D148 contributes to the Mg(2+) binding site. Thiamine diphosphate contacts are provided by residues 149–150, N177, Y284, and E365; that span reads GA. N177 contributes to the Mg(2+) binding site.

This sequence belongs to the transketolase family. DXPS subfamily. Homodimer. Mg(2+) is required as a cofactor. Requires thiamine diphosphate as cofactor.

It carries out the reaction D-glyceraldehyde 3-phosphate + pyruvate + H(+) = 1-deoxy-D-xylulose 5-phosphate + CO2. The protein operates within metabolic intermediate biosynthesis; 1-deoxy-D-xylulose 5-phosphate biosynthesis; 1-deoxy-D-xylulose 5-phosphate from D-glyceraldehyde 3-phosphate and pyruvate: step 1/1. In terms of biological role, catalyzes the acyloin condensation reaction between C atoms 2 and 3 of pyruvate and glyceraldehyde 3-phosphate to yield 1-deoxy-D-xylulose-5-phosphate (DXP). The protein is 1-deoxy-D-xylulose-5-phosphate synthase of Francisella tularensis subsp. novicida (strain U112).